The following is a 312-amino-acid chain: Olfactory receptor 2L8 (312 aa).

The Extracellular segment spans residues 1-24; that stretch reads MENYNQTSTDFILLGLFPPSRIDL. Asn5 is a glycosylation site (N-linked (GlcNAc...) asparagine). The helical transmembrane segment at 25-48 threads the bilayer; sequence FFFILIVFIFLMALIGNLSMILLI. Topologically, residues 49–56 are cytoplasmic; sequence FLDTHLHT. Residues 57–78 traverse the membrane as a helical segment; it reads PMYFLLSQLSLIDLNYISTIVP. At 79–99 the chain is on the extracellular side; the sequence is KMASDFLHGNKSISFTGCGIQ. Asn88 carries N-linked (GlcNAc...) asparagine glycosylation. Residues Cys96 and Cys188 are joined by a disulfide bond. Residues 100–119 traverse the membrane as a helical segment; sequence SFFFLALGGAEALLLASMAY. At 120–138 the chain is on the cytoplasmic side; it reads DRYIAICFPLHYLIRMSKR. Residues 139 to 157 traverse the membrane as a helical segment; that stretch reads VCVLMITGSWIIGSINACA. At 158–194 the chain is on the extracellular side; it reads HTVYVLHIPYCRSRAINHFFCDVPAMVTLACMDTWVY. Residues 195–218 form a helical membrane-spanning segment; it reads EGTVFLSATIFLVFPFIGISCSYG. Residues 219–235 lie on the Cytoplasmic side of the membrane; sequence QVLFAVYHMKSAEGRKK. The helical transmembrane segment at 236–258 threads the bilayer; the sequence is AYLTCSTHLTVVTFYYAPFVYTY. Residues 259-271 lie on the Extracellular side of the membrane; it reads LRPRSLRSPTEDK. A helical transmembrane segment spans residues 272–291; that stretch reads VLAVFYTILTPMLNPIIYSL. Topologically, residues 292 to 312 are cytoplasmic; it reads RNKEVMGALTRVSQRICSVKM.

Belongs to the G-protein coupled receptor 1 family.

The protein localises to the cell membrane. Its function is as follows. Odorant receptor. In Homo sapiens (Human), this protein is Olfactory receptor 2L8 (OR2L8).